Reading from the N-terminus, the 700-residue chain is Elongation factor G (700 aa).

Residues 8–290 (ERYRNIGISA…AVIDYLPAPT (283 aa)) enclose the tr-type G domain. GTP is bound by residues 17-24 (AHIDAGKT), 88-92 (DTPGH), and 142-145 (NKMD).

This sequence belongs to the TRAFAC class translation factor GTPase superfamily. Classic translation factor GTPase family. EF-G/EF-2 subfamily.

Its subcellular location is the cytoplasm. Functionally, catalyzes the GTP-dependent ribosomal translocation step during translation elongation. During this step, the ribosome changes from the pre-translocational (PRE) to the post-translocational (POST) state as the newly formed A-site-bound peptidyl-tRNA and P-site-bound deacylated tRNA move to the P and E sites, respectively. Catalyzes the coordinated movement of the two tRNA molecules, the mRNA and conformational changes in the ribosome. This is Elongation factor G (fusA) from Pasteurella multocida (strain Pm70).